Reading from the N-terminus, the 382-residue chain is Cell division protein FtsZ (382 aa).

Residues 21–25 (GGGSN), 108–110 (GTG), glutamate 139, arginine 143, and aspartate 187 contribute to the GTP site. The interval 322–382 (RAQQQSNFNR…FLRNRRRKSR (61 aa)) is disordered. Residues 340-352 (KSKEKEAEKKEPR) are compositionally biased toward basic and acidic residues.

The protein belongs to the FtsZ family. Homodimer. Polymerizes to form a dynamic ring structure in a strictly GTP-dependent manner. Interacts directly with several other division proteins.

It is found in the cytoplasm. Functionally, essential cell division protein that forms a contractile ring structure (Z ring) at the future cell division site. The regulation of the ring assembly controls the timing and the location of cell division. One of the functions of the FtsZ ring is to recruit other cell division proteins to the septum to produce a new cell wall between the dividing cells. Binds GTP and shows GTPase activity. In Halalkalibacterium halodurans (strain ATCC BAA-125 / DSM 18197 / FERM 7344 / JCM 9153 / C-125) (Bacillus halodurans), this protein is Cell division protein FtsZ.